The following is a 565-amino-acid chain: MRWLATFVALLIAISSVSAAEVHIFVDKESVNLGDQIRFQVYFEVNRSADIAVVGDGGDGALLCHVDEGEDLYEKCGEEWVFRIPEDWQEGTYRLKVVIDDTEPEEHSEEFKVVKPKIKEFELKNLVYQSRTELEVLVESANPASLKLRLYGNNVDLYYEETADYEEESNVYSAKFDLNLREVYERTRDIADAVKPGKYILDLKLEYGGKVWDSRRVTVSVVKPEVAVSAPEKVKVGEPVVVSIDTNRVGDTEYDGILVVLEGNNFLLYKKAYLDENGKAKVQFETAGLREGKYAIYVRDTSKTSTLSISDLAKNYYDLPPDNSFSRIIQAEDDVLVKKELWIVGNGKESVKVILQPSKAEIFNGTTMSFKVLLNQSVELSSFEFVIFVSGNSVKIESVTLPDGFRLLDKTLYPDYLKISAYTTNKTKTGFLAEVKVAAQSPGESRLLIKNAGVYNGLGEFVDVTTSQADVVVKESRKEGNTANVSITLKENATGAENVTNNSVTATTPPAKASQQTPAPATPPVSMNVGEIDFTKVFMFTAGFLATYSAGRIMMRKLSARGGKR.

The N-terminal stretch at methionine 1–alanine 19 is a signal peptide. Residues threonine 494–valine 504 show a composition bias toward polar residues. Residues threonine 494–valine 525 form a disordered region. Residues threonine 505–alanine 519 are compositionally biased toward low complexity.

This is an uncharacterized protein from Archaeoglobus fulgidus (strain ATCC 49558 / DSM 4304 / JCM 9628 / NBRC 100126 / VC-16).